We begin with the raw amino-acid sequence, 305 residues long: Ribonuclease BN (305 aa).

Positions 64, 66, 68, 69, 141, 212, and 270 each coordinate Zn(2+). Asp-68 functions as the Proton acceptor in the catalytic mechanism.

This sequence belongs to the RNase Z family. RNase BN subfamily. As to quaternary structure, homodimer. The cofactor is Zn(2+).

In terms of biological role, zinc phosphodiesterase, which has both exoribonuclease and endoribonuclease activities. The chain is Ribonuclease BN from Escherichia coli O81 (strain ED1a).